The chain runs to 391 residues: MDLLPYDVVEHILERLDVKSLLNCKSVSKQWRSTIRCRAFQERQLMHRRQSCNPDVLLVSVADEFYLLKRVHQVMRTLVLGSSVSVRILTPWEDTLYKVCQSSCDGLICLYNTYASNIVVNPTTRWHREFPLSTFQRLDRYEHQVGSVSWAKLGFGKDKINGTYKPVWLYNSAELGGLNDDDEDYDDEDKNNISMICQGNNNTSTFCEVFDFTTKAWRFVVPASPYRILPYQDPVYVDGSLHWLTEGETTNVLSFDLHAETFQVVSKAPFLHHHDYSSRELIMCNLDDRLCVSEKMWPNQVIWSLDSDHKTWKEIYSIDLNITSSLFGSNGFALRPLGVFDKDKLLFCEPEYGDQLLTHDPKTKSYEFDYRFFSPTTALPLCYFQSLISIL.

The 43-residue stretch at 1–43 folds into the F-box domain; sequence MDLLPYDVVEHILERLDVKSLLNCKSVSKQWRSTIRCRAFQER.

The protein is F-box protein At2g34280 of Arabidopsis thaliana (Mouse-ear cress).